A 310-amino-acid polypeptide reads, in one-letter code: GTP-binding protein GTR1 (310 aa).

Positions 15, 18, 19, 20, 21, 35, 41, 64, 126, 129, and 166 each coordinate GTP.

Belongs to the GTR/RAG GTP-binding protein family. As to quaternary structure, heterodimer; with GTR2. Component of the GSE complex composed of GTR1, GTR2, SLM4, MEH1 and LTV1. Interacts with GTR2; the interaction is direct. Interacts with TOR1.

It is found in the vacuole membrane. It carries out the reaction GTP + H2O = GDP + phosphate + H(+). In terms of biological role, GTPase involved in activation of the TORC1 signaling pathway, which promotes growth and represses autophagy in nutrient-rich conditions. Also required for TORC1 inactivation during nitrogen starvation. Required for intracellular sorting of GAP1 out of the endosome. Functionally associated with the inorganic phosphate transporter PHO84, and may be involved in regulating its function or localization. The protein is GTP-binding protein GTR1 (GTR1) of Saccharomyces cerevisiae (strain ATCC 204508 / S288c) (Baker's yeast).